Here is a 194-residue protein sequence, read N- to C-terminus: Small ribosomal subunit protein uS5 (194 aa).

An S5 DRBM domain is found at 26–89 (LEEKVVEIRR…ADAKKHLIRV (64 aa)).

This sequence belongs to the universal ribosomal protein uS5 family. Part of the 30S ribosomal subunit. Contacts proteins S4 and S8.

Functionally, with S4 and S12 plays an important role in translational accuracy. Located at the back of the 30S subunit body where it stabilizes the conformation of the head with respect to the body. This Persephonella marina (strain DSM 14350 / EX-H1) protein is Small ribosomal subunit protein uS5.